Here is a 480-residue protein sequence, read N- to C-terminus: Acetyl-coenzyme A carboxylase carboxyl transferase subunit beta, chloroplastic (480 aa).

The segment at 25–48 (TSSLGPIENASESKDPNINDTDKN) is disordered. Residues 35–47 (SESKDPNINDTDK) show a composition bias toward basic and acidic residues. Positions 216–480 (LWVQCENCYG…LHTFFPLNQN (265 aa)) constitute a CoA carboxyltransferase N-terminal domain. Residues C220, C223, C239, and C242 each coordinate Zn(2+). Residues 220–242 (CENCYGLNYKKFFKSKMNLCEQC) form a C4-type zinc finger.

Belongs to the AccD/PCCB family. Acetyl-CoA carboxylase is a heterohexamer composed of biotin carboxyl carrier protein, biotin carboxylase and 2 subunits each of ACCase subunit alpha and ACCase plastid-coded subunit beta (accD). Zn(2+) serves as cofactor.

The protein localises to the plastid. Its subcellular location is the chloroplast stroma. The enzyme catalyses N(6)-carboxybiotinyl-L-lysyl-[protein] + acetyl-CoA = N(6)-biotinyl-L-lysyl-[protein] + malonyl-CoA. It functions in the pathway lipid metabolism; malonyl-CoA biosynthesis; malonyl-CoA from acetyl-CoA: step 1/1. Functionally, component of the acetyl coenzyme A carboxylase (ACC) complex. Biotin carboxylase (BC) catalyzes the carboxylation of biotin on its carrier protein (BCCP) and then the CO(2) group is transferred by the transcarboxylase to acetyl-CoA to form malonyl-CoA. The chain is Acetyl-coenzyme A carboxylase carboxyl transferase subunit beta, chloroplastic from Helianthus annuus (Common sunflower).